Consider the following 121-residue polypeptide: MANPTQIYSRDVKWRKGVMRTLVSELFANGRITTTLTRAKELRRHAEKLITKAKNPTLANRRICASFLRPTLVEEGKKDVLKHLFDTIAPSYAKRNGGYTRIYKLVNRQGDNAPMAIIELV.

The protein belongs to the bacterial ribosomal protein bL17 family. In terms of assembly, part of the 50S ribosomal subunit. Contacts protein L32.

The chain is Large ribosomal subunit protein bL17 from Mycoplasmopsis agalactiae (strain NCTC 10123 / CIP 59.7 / PG2) (Mycoplasma agalactiae).